The following is a 152-amino-acid chain: Superoxide dismutase [Cu-Zn] (152 aa).

Cu cation-binding residues include His45, His47, and His62. A disulfide bond links Cys56 and Cys145. Zn(2+) contacts are provided by His62, His70, His79, and Asp82. Residue His119 coordinates Cu cation.

This sequence belongs to the Cu-Zn superoxide dismutase family. As to quaternary structure, homodimer. The cofactor is Cu cation. Zn(2+) serves as cofactor.

The protein localises to the cytoplasm. The catalysed reaction is 2 superoxide + 2 H(+) = H2O2 + O2. Functionally, destroys radicals which are normally produced within the cells and which are toxic to biological systems. In Nicotiana plumbaginifolia (Leadwort-leaved tobacco), this protein is Superoxide dismutase [Cu-Zn] (SODCC).